A 410-amino-acid chain; its full sequence is Putative ribosomal large subunit pseudouridine synthase SVR1, chloroplastic (410 aa).

The N-terminal 35 residues, Met-1–Arg-35, are a transit peptide targeting the chloroplast. Residues His-96–Leu-143 form a disordered region. Residues Pro-107–Gln-117 are compositionally biased toward basic residues. The segment covering Pro-118 to Ser-135 has biased composition (low complexity). The S4 RNA-binding domain occupies Gln-160 to Pro-229. Asp-274 (nucleophile) is an active-site residue.

It belongs to the pseudouridine synthase RsuA family. As to expression, highly expressed in young seedlings. Expressed in roots, rosette leaves, cauline leaves, stems and flowers.

The protein localises to the plastid. The protein resides in the chloroplast. In terms of biological role, responsible for synthesis of pseudouridine in chloroplastic 23S ribosomal RNA. Necessary for normal chloroplast rRNA processing and translation. Required for normal chloroplast development and maintenance. May function in other plastids, such as root amyloplasts. The chain is Putative ribosomal large subunit pseudouridine synthase SVR1, chloroplastic (SVR1) from Arabidopsis thaliana (Mouse-ear cress).